The chain runs to 619 residues: Dihydroxy-acid dehydratase (619 aa).

Asp-81 serves as a coordination point for Mg(2+). [2Fe-2S] cluster is bound at residue Cys-122. Mg(2+) contacts are provided by Asp-123 and Lys-124. An N6-carboxylysine modification is found at Lys-124. Cys-198 serves as a coordination point for [2Fe-2S] cluster. Glu-494 contributes to the Mg(2+) binding site. The active-site Proton acceptor is Ser-520.

It belongs to the IlvD/Edd family. In terms of assembly, homodimer. The cofactor is [2Fe-2S] cluster. Requires Mg(2+) as cofactor.

It catalyses the reaction (2R)-2,3-dihydroxy-3-methylbutanoate = 3-methyl-2-oxobutanoate + H2O. The enzyme catalyses (2R,3R)-2,3-dihydroxy-3-methylpentanoate = (S)-3-methyl-2-oxopentanoate + H2O. It participates in amino-acid biosynthesis; L-isoleucine biosynthesis; L-isoleucine from 2-oxobutanoate: step 3/4. The protein operates within amino-acid biosynthesis; L-valine biosynthesis; L-valine from pyruvate: step 3/4. Functionally, functions in the biosynthesis of branched-chain amino acids. Catalyzes the dehydration of (2R,3R)-2,3-dihydroxy-3-methylpentanoate (2,3-dihydroxy-3-methylvalerate) into 2-oxo-3-methylpentanoate (2-oxo-3-methylvalerate) and of (2R)-2,3-dihydroxy-3-methylbutanoate (2,3-dihydroxyisovalerate) into 2-oxo-3-methylbutanoate (2-oxoisovalerate), the penultimate precursor to L-isoleucine and L-valine, respectively. The protein is Dihydroxy-acid dehydratase of Neisseria gonorrhoeae (strain ATCC 700825 / FA 1090).